Reading from the N-terminus, the 940-residue chain is Protein translocase subunit SecA 1 (940 aa).

ATP is bound by residues Q83, 101-105 (GEGKT), and D490. A disordered region spans residues 856 to 940 (AEQGGTATAA…AKPPKSVKRR (85 aa)).

The protein belongs to the SecA family. As to quaternary structure, monomer and homodimer. Part of the essential Sec protein translocation apparatus which comprises SecA, SecYEG and auxiliary proteins SecDF. Other proteins may also be involved.

The protein resides in the cell membrane. The protein localises to the cytoplasm. The catalysed reaction is ATP + H2O + cellular proteinSide 1 = ADP + phosphate + cellular proteinSide 2.. In terms of biological role, part of the Sec protein translocase complex. Interacts with the SecYEG preprotein conducting channel. Has a central role in coupling the hydrolysis of ATP to the transfer of proteins into and across the cell membrane, serving as an ATP-driven molecular motor driving the stepwise translocation of polypeptide chains across the membrane. The protein is Protein translocase subunit SecA 1 of Mycolicibacterium paratuberculosis (strain ATCC BAA-968 / K-10) (Mycobacterium paratuberculosis).